A 395-amino-acid polypeptide reads, in one-letter code: Chalcone synthase (395 aa).

Val2 is subject to N-acetylvaline. Cys169 is an active-site residue.

This sequence belongs to the thiolase-like superfamily. Chalcone/stilbene synthases family.

The catalysed reaction is (E)-4-coumaroyl-CoA + 3 malonyl-CoA + 3 H(+) = 2',4,4',6'-tetrahydroxychalcone + 3 CO2 + 4 CoA. Its pathway is secondary metabolite biosynthesis; flavonoid biosynthesis. In terms of biological role, the primary product of this enzyme is 4,2',4',6'-tetrahydroxychalcone (also termed naringenin-chalcone or chalcone) which can under specific conditions spontaneously isomerize into naringenin. In Cardamine amara (Large bitter-cress), this protein is Chalcone synthase (CHS).